A 251-amino-acid chain; its full sequence is Hydroxyacylglutathione hydrolase (251 aa).

The Zn(2+) site is built by H54, H56, D58, H59, H113, D140, and H178.

This sequence belongs to the metallo-beta-lactamase superfamily. Glyoxalase II family. As to quaternary structure, monomer. The cofactor is Zn(2+).

The enzyme catalyses an S-(2-hydroxyacyl)glutathione + H2O = a 2-hydroxy carboxylate + glutathione + H(+). It functions in the pathway secondary metabolite metabolism; methylglyoxal degradation; (R)-lactate from methylglyoxal: step 2/2. In terms of biological role, thiolesterase that catalyzes the hydrolysis of S-D-lactoyl-glutathione to form glutathione and D-lactic acid. In Synechococcus sp. (strain CC9902), this protein is Hydroxyacylglutathione hydrolase.